Consider the following 612-residue polypeptide: Peroxisomal carnitine O-octanoyltransferase (612 aa).

M1 bears the N-acetylmethionine mark. 2 positions are modified to N6-succinyllysine: K40 and K57. H327 functions as the Proton acceptor in the catalytic mechanism. CoA contacts are provided by residues K406 and 410–417 (KKEALHPD). Position 406 is an N6-acetyllysine; alternate (K406). At K406 the chain carries N6-succinyllysine; alternate. Positions 439, 441, and 452 each coordinate (R)-carnitine. A Microbody targeting signal motif is present at residues 610–612 (AHL).

This sequence belongs to the carnitine/choline acetyltransferase family. Liver.

It is found in the peroxisome. It catalyses the reaction octanoyl-CoA + (R)-carnitine = O-octanoyl-(R)-carnitine + CoA. The catalysed reaction is 4,8-dimethylnonanoyl-CoA + (R)-carnitine = O-4,8-dimethylnonanoyl-(R)-carnitine + CoA. The protein operates within lipid metabolism; fatty acid beta-oxidation. Beta-oxidation of fatty acids. The highest activity concerns the C6 to C10 chain length substrate. The sequence is that of Peroxisomal carnitine O-octanoyltransferase (Crot) from Rattus norvegicus (Rat).